The primary structure comprises 102 residues: NADH-quinone oxidoreductase subunit K (102 aa).

The next 3 helical transmembrane spans lie at 6–26 (LEHG…GVMV), 30–50 (LLFM…AFVL), and 62–82 (VMFI…LAIV).

It belongs to the complex I subunit 4L family. NDH-1 is composed of 14 different subunits. Subunits NuoA, H, J, K, L, M, N constitute the membrane sector of the complex.

It is found in the cell inner membrane. The enzyme catalyses a quinone + NADH + 5 H(+)(in) = a quinol + NAD(+) + 4 H(+)(out). Functionally, NDH-1 shuttles electrons from NADH, via FMN and iron-sulfur (Fe-S) centers, to quinones in the respiratory chain. The immediate electron acceptor for the enzyme in this species is believed to be ubiquinone. Couples the redox reaction to proton translocation (for every two electrons transferred, four hydrogen ions are translocated across the cytoplasmic membrane), and thus conserves the redox energy in a proton gradient. The sequence is that of NADH-quinone oxidoreductase subunit K from Acinetobacter baumannii (strain AB307-0294).